The primary structure comprises 100 residues: Large ribosomal subunit protein bL27 (100 aa).

The propeptide occupies 1-9 (MLSINLSLC).

This sequence belongs to the bacterial ribosomal protein bL27 family. Post-translationally, the N-terminus is cleaved by ribosomal processing cysteine protease Prp.

In Clostridium acetobutylicum (strain ATCC 824 / DSM 792 / JCM 1419 / IAM 19013 / LMG 5710 / NBRC 13948 / NRRL B-527 / VKM B-1787 / 2291 / W), this protein is Large ribosomal subunit protein bL27.